Here is a 70-residue protein sequence, read N- to C-terminus: ATP synthase subunit c (70 aa).

The next 2 helical transmembrane spans lie at 4-24 (IAAA…NGLI) and 45-65 (LMFI…VIAF).

Belongs to the ATPase C chain family. As to quaternary structure, F-type ATPases have 2 components, F(1) - the catalytic core - and F(0) - the membrane proton channel. F(1) has five subunits: alpha(3), beta(3), gamma(1), delta(1), epsilon(1). F(0) has three main subunits: a(1), b(2) and c(10-14). The alpha and beta chains form an alternating ring which encloses part of the gamma chain. F(1) is attached to F(0) by a central stalk formed by the gamma and epsilon chains, while a peripheral stalk is formed by the delta and b chains.

The protein resides in the cell membrane. Its function is as follows. F(1)F(0) ATP synthase produces ATP from ADP in the presence of a proton or sodium gradient. F-type ATPases consist of two structural domains, F(1) containing the extramembraneous catalytic core and F(0) containing the membrane proton channel, linked together by a central stalk and a peripheral stalk. During catalysis, ATP synthesis in the catalytic domain of F(1) is coupled via a rotary mechanism of the central stalk subunits to proton translocation. The sequence is that of ATP synthase subunit c from Bacillus pumilus (strain SAFR-032).